The sequence spans 227 residues: Urease accessory protein UreE (227 aa).

The interval 192-227 is disordered; the sequence is PHGSGLHVHAIHSHGHSHSHDHDHDHNHDHDHKHKQ. The segment covering 209 to 221 has biased composition (basic and acidic residues); that stretch reads HSHDHDHDHNHDH.

Belongs to the UreE family.

It is found in the cytoplasm. Its function is as follows. Involved in urease metallocenter assembly. Binds nickel. Probably functions as a nickel donor during metallocenter assembly. The polypeptide is Urease accessory protein UreE (Yersinia bercovieri).